The sequence spans 438 residues: Serine--tRNA ligase (438 aa).

245-247 (TAE) is a binding site for L-serine. 276-278 (RSE) lines the ATP pocket. Residue Glu299 participates in L-serine binding. 363–366 (EISS) is an ATP binding site. Ser398 lines the L-serine pocket.

This sequence belongs to the class-II aminoacyl-tRNA synthetase family. Type-1 seryl-tRNA synthetase subfamily. Homodimer. The tRNA molecule binds across the dimer.

It is found in the cytoplasm. The enzyme catalyses tRNA(Ser) + L-serine + ATP = L-seryl-tRNA(Ser) + AMP + diphosphate + H(+). It carries out the reaction tRNA(Sec) + L-serine + ATP = L-seryl-tRNA(Sec) + AMP + diphosphate + H(+). It functions in the pathway aminoacyl-tRNA biosynthesis; selenocysteinyl-tRNA(Sec) biosynthesis; L-seryl-tRNA(Sec) from L-serine and tRNA(Sec): step 1/1. Catalyzes the attachment of serine to tRNA(Ser). Is also able to aminoacylate tRNA(Sec) with serine, to form the misacylated tRNA L-seryl-tRNA(Sec), which will be further converted into selenocysteinyl-tRNA(Sec). In Delftia acidovorans (strain DSM 14801 / SPH-1), this protein is Serine--tRNA ligase.